Here is a 185-residue protein sequence, read N- to C-terminus: Keratin-associated protein 4-8 (185 aa).

Repeat copies occupy residues 14–18 (GCGQD), 19–23 (LCQET), 24–28 (CCCPS), 39–43 (CYRPS), 44–48 (YSVSC), 49–53 (CCRPQ), 54–58 (CCQSV), 59–63 (CCQPT), 64–68 (CCRPS), 69–73 (CCVSS), 74–78 (CCKPQ), 79–83 (CCQSV), 84–88 (CCQPT), 89–93 (CCHPS), 94–98 (CCISS), 99–103 (CCRPS), 104–108 (CCVSS), 109–113 (CCKPQ), 114–118 (CCQSV), 119–123 (CCQPN), 124–128 (CCRPS), 134–138 (CCRPS), 139–143 (CCESS), 144–148 (CCRPC), and 149–164 (CCLR…HTTC). Positions 14–164 (GCGQDLCQET…CGRVSCHTTC (151 aa)) are 25 X 5 AA repeats of C-C-[IKRQVHEC]-[SPRT]-[STCVQPR].

It belongs to the KRTAP type 4 family. As to quaternary structure, interacts with hair keratins. In terms of tissue distribution, expressed in the hair follicles.

Functionally, in the hair cortex, hair keratin intermediate filaments are embedded in an interfilamentous matrix, consisting of hair keratin-associated proteins (KRTAP), which are essential for the formation of a rigid and resistant hair shaft through their extensive disulfide bond cross-linking with abundant cysteine residues of hair keratins. The matrix proteins include the high-sulfur and high-glycine-tyrosine keratins. The protein is Keratin-associated protein 4-8 (KRTAP4-8) of Homo sapiens (Human).